Consider the following 286-residue polypeptide: Nucleotide-binding protein HS_1178 (286 aa).

8 to 15 (GRSGAGKS) is a binding site for ATP. 56 to 59 (DIRN) contributes to the GTP binding site.

This sequence belongs to the RapZ-like family.

Displays ATPase and GTPase activities. This chain is Nucleotide-binding protein HS_1178, found in Histophilus somni (strain 129Pt) (Haemophilus somnus).